A 255-amino-acid chain; its full sequence is Small ribosomal subunit protein uS2 (255 aa).

It belongs to the universal ribosomal protein uS2 family.

This chain is Small ribosomal subunit protein uS2, found in Geotalea daltonii (strain DSM 22248 / JCM 15807 / FRC-32) (Geobacter daltonii).